We begin with the raw amino-acid sequence, 371 residues long: Neutral protease 2 homolog MGYG_03465 (371 aa).

A signal peptide spans 1–19; sequence MQFVAVLAALGALVAPAAA. A propeptide spanning residues 20–188 is cleaved from the precursor; sequence YPHAPMNETL…SIHARALEKR (169 aa). 2 disulfide bridges follow: Cys196–Cys267 and Cys274–Cys292. His316 contributes to the Zn(2+) binding site. Glu317 is a catalytic residue. 2 residues coordinate Zn(2+): His320 and Asp331.

The protein belongs to the peptidase M35 family. Requires Zn(2+) as cofactor.

It is found in the secreted. It catalyses the reaction Preferential cleavage of bonds with hydrophobic residues in P1'. Also 3-Asn-|-Gln-4 and 8-Gly-|-Ser-9 bonds in insulin B chain.. Functionally, secreted metalloproteinase that allows assimilation of proteinaceous substrates. Shows high activities on basic nuclear substrates such as histone and protamine. May be involved in virulence. This chain is Neutral protease 2 homolog MGYG_03465, found in Arthroderma gypseum (strain ATCC MYA-4604 / CBS 118893) (Microsporum gypseum).